The chain runs to 133 residues: MTKNTIQESVATGRRKQAVSSVRLRSGNGKIDVNGKTLEQYFPLEVQRATILAPLKMLGDVNSFDLIIRVSGGGVQGQVIATRLGLARAVLQEKEDMKQELKSQGFLTRDPRKKERKKYGRKKARKSFQFSKR.

The segment at 97 to 133 (MKQELKSQGFLTRDPRKKERKKYGRKKARKSFQFSKR) is disordered. A compositionally biased stretch (basic residues) spans 114–133 (KERKKYGRKKARKSFQFSKR).

The protein belongs to the universal ribosomal protein uS9 family.

The polypeptide is Small ribosomal subunit protein uS9 (rpsI) (Chlamydia muridarum (strain MoPn / Nigg)).